A 312-amino-acid polypeptide reads, in one-letter code: Ribonuclease Z (312 aa).

His63, His65, Asp67, His68, His140, Asp211, and His269 together coordinate Zn(2+). The active-site Proton acceptor is Asp67.

Belongs to the RNase Z family. In terms of assembly, homodimer. Zn(2+) is required as a cofactor.

It catalyses the reaction Endonucleolytic cleavage of RNA, removing extra 3' nucleotides from tRNA precursor, generating 3' termini of tRNAs. A 3'-hydroxy group is left at the tRNA terminus and a 5'-phosphoryl group is left at the trailer molecule.. Its function is as follows. Zinc phosphodiesterase, which displays some tRNA 3'-processing endonuclease activity. Probably involved in tRNA maturation, by removing a 3'-trailer from precursor tRNA. This is Ribonuclease Z from Anoxybacillus flavithermus (strain DSM 21510 / WK1).